Here is a 265-residue protein sequence, read N- to C-terminus: MICOS complex subunit Mic27 (265 aa).

Residues 1 to 27 constitute a mitochondrion transit peptide; the sequence is MAAFRMGKLTTIPAGLIYASINVRLAK. Topologically, residues 28–110 are mitochondrial intermembrane; sequence EEEPKKQLVR…YVYLKNPPQD (83 aa). A helical membrane pass occupies residues 111–129; the sequence is FLPKMGVITASGLAGLLSA. The Mitochondrial matrix segment spans residues 130 to 137; that stretch reads RKGSRFKK. A helical transmembrane segment spans residues 138 to 155; it reads IAYPLGLATLGATVCYPA. The Mitochondrial intermembrane segment spans residues 156-265; sequence QSVIIAKITG…DDKDMYSTRS (110 aa). Disordered regions lie at residues 187-215 and 229-265; these read SENE…PDLK and VIKS…STRS. Residue Ser204 is modified to Phosphoserine. Residues 229-241 show a composition bias toward polar residues; sequence VIKSESTSGTTQF. Over residues 246-265 the composition is skewed to basic and acidic residues; the sequence is KLMDHGQSHPDDKDMYSTRS.

It belongs to the apolipoprotein O/MICOS complex subunit Mic27 family. In terms of assembly, component of the mitochondrial contact site and cristae organizing system (MICOS) complex, composed of at least MICOS10/MIC10, CHCHD3/MIC19, CHCHD6/MIC25, APOOL/MIC27, IMMT/MIC60, APOO/MIC23/MIC26 and MICOS13/MIC13. This complex was also known under the names MINOS or MitOS complex. The MICOS complex associates with mitochondrial outer membrane proteins SAMM50, MTX1 and MTX2 (together described as components of the mitochondrial outer membrane sorting assembly machinery (SAM) complex) and DNAJC11, mitochondrial inner membrane protein TMEM11 and with HSPA9. The MICOS and SAM complexes together with DNAJC11 are part of a large protein complex spanning both membranes termed the mitochondrial intermembrane space bridging (MIB) complex. Interacts with MICOS10/MIC10, IMMT/MIC60 and APOO/MIC23/MIC26.

The protein localises to the mitochondrion inner membrane. Its subcellular location is the mitochondrion. Its function is as follows. Component of the MICOS complex, a large protein complex of the mitochondrial inner membrane that plays crucial roles in the maintenance of crista junctions, inner membrane architecture, and formation of contact sites to the outer membrane. Specifically binds to cardiolipin (in vitro) but not to the precursor lipid phosphatidylglycerol. Plays a crucial role in crista junction formation and mitochondrial function. In Mus musculus (Mouse), this protein is MICOS complex subunit Mic27 (Apool).